The chain runs to 224 residues: Ribonuclease HII (224 aa).

Residues 1 to 219 (MMIAGIDEAG…VENIREELKK (219 aa)) form the RNase H type-2 domain. A divalent metal cation contacts are provided by Asp7, Glu8, and Asp105.

The protein belongs to the RNase HII family. Mn(2+) is required as a cofactor. Mg(2+) serves as cofactor.

It localises to the cytoplasm. The catalysed reaction is Endonucleolytic cleavage to 5'-phosphomonoester.. In terms of biological role, endonuclease that specifically degrades the RNA of RNA-DNA hybrids. In Methanosarcina barkeri (strain Fusaro / DSM 804), this protein is Ribonuclease HII.